Here is a 231-residue protein sequence, read N- to C-terminus: Phosphatidylserine decarboxylase proenzyme (231 aa).

Ser188 functions as the Schiff-base intermediate with substrate; via pyruvic acid in the catalytic mechanism. A Pyruvic acid (Ser); by autocatalysis modification is found at Ser188.

Belongs to the phosphatidylserine decarboxylase family. PSD-A subfamily. Heterodimer of a large membrane-associated beta subunit and a small pyruvoyl-containing alpha subunit. Pyruvate is required as a cofactor. Post-translationally, is synthesized initially as an inactive proenzyme. Formation of the active enzyme involves a self-maturation process in which the active site pyruvoyl group is generated from an internal serine residue via an autocatalytic post-translational modification. Two non-identical subunits are generated from the proenzyme in this reaction, and the pyruvate is formed at the N-terminus of the alpha chain, which is derived from the carboxyl end of the proenzyme. The post-translation cleavage follows an unusual pathway, termed non-hydrolytic serinolysis, in which the side chain hydroxyl group of the serine supplies its oxygen atom to form the C-terminus of the beta chain, while the remainder of the serine residue undergoes an oxidative deamination to produce ammonia and the pyruvoyl prosthetic group on the alpha chain.

The protein resides in the cell membrane. The enzyme catalyses a 1,2-diacyl-sn-glycero-3-phospho-L-serine + H(+) = a 1,2-diacyl-sn-glycero-3-phosphoethanolamine + CO2. It participates in phospholipid metabolism; phosphatidylethanolamine biosynthesis; phosphatidylethanolamine from CDP-diacylglycerol: step 2/2. In terms of biological role, catalyzes the formation of phosphatidylethanolamine (PtdEtn) from phosphatidylserine (PtdSer). The protein is Phosphatidylserine decarboxylase proenzyme of Rickettsia bellii (strain OSU 85-389).